We begin with the raw amino-acid sequence, 351 residues long: Probable protein phosphatase 2C 8 (351 aa).

The segment at 1-63 is disordered; sequence MLEKESDLTA…REAEEDKPSF (63 aa). The span at 54–63 shows a compositional bias: basic and acidic residues; it reads REAEEDKPSF. The PPM-type phosphatase domain occupies 74–348; that stretch reads EADVAEDKGA…DNCTAIVIVF (275 aa). Positions 114, 115, 295, and 339 each coordinate Mn(2+).

This sequence belongs to the PP2C family. The cofactor is Mg(2+). Mn(2+) serves as cofactor.

The catalysed reaction is O-phospho-L-seryl-[protein] + H2O = L-seryl-[protein] + phosphate. It catalyses the reaction O-phospho-L-threonyl-[protein] + H2O = L-threonyl-[protein] + phosphate. In Arabidopsis thaliana (Mouse-ear cress), this protein is Probable protein phosphatase 2C 8.